The chain runs to 347 residues: 4-hydroxy-2-oxovalerate aldolase 4 (347 aa).

The region spanning 9 to 259 (ITIVDTTLRD…DTGVDLFPLI (251 aa)) is the Pyruvate carboxyltransferase domain. Substrate is bound by residues 17-18 (RD), serine 171, and histidine 198. Aspartate 18 contacts Mn(2+). The Mn(2+) site is built by histidine 198 and histidine 200. Tyrosine 289 contributes to the substrate binding site.

The protein belongs to the 4-hydroxy-2-oxovalerate aldolase family.

It carries out the reaction (S)-4-hydroxy-2-oxopentanoate = acetaldehyde + pyruvate. The polypeptide is 4-hydroxy-2-oxovalerate aldolase 4 (Rhodococcus opacus (strain B4)).